Consider the following 186-residue polypeptide: Peptidyl-tRNA hydrolase (186 aa).

Residue Y14 coordinates tRNA. The active-site Proton acceptor is the H19. TRNA contacts are provided by F64, N66, and N112.

It belongs to the PTH family. Monomer.

Its subcellular location is the cytoplasm. It catalyses the reaction an N-acyl-L-alpha-aminoacyl-tRNA + H2O = an N-acyl-L-amino acid + a tRNA + H(+). Hydrolyzes ribosome-free peptidyl-tRNAs (with 1 or more amino acids incorporated), which drop off the ribosome during protein synthesis, or as a result of ribosome stalling. Functionally, catalyzes the release of premature peptidyl moieties from peptidyl-tRNA molecules trapped in stalled 50S ribosomal subunits, and thus maintains levels of free tRNAs and 50S ribosomes. This is Peptidyl-tRNA hydrolase from Mycoplasma mycoides subsp. mycoides SC (strain CCUG 32753 / NCTC 10114 / PG1).